Here is a 362-residue protein sequence, read N- to C-terminus: Holliday junction branch migration complex subunit RuvB (362 aa).

The interval 1 to 20 (MKRTIMTNTDTFEQPNTGAN) is disordered. Residues 15–203 (PNTGANEESL…FGFTAHLDFY (189 aa)) are large ATPase domain (RuvB-L). ATP is bound by residues L42, R43, G84, K87, T88, T89, 150–152 (EDF), R193, Y203, and R240. T88 provides a ligand contact to Mg(2+). Positions 204–274 (PHEELEKLIE…DVKEALALYQ (71 aa)) are small ATPAse domain (RuvB-S). Residues 277 to 362 (TEGLDRLDIA…ESAYDVNEMS (86 aa)) are head domain (RuvB-H). Positions 332 and 337 each coordinate DNA.

Belongs to the RuvB family. As to quaternary structure, homohexamer. Forms an RuvA(8)-RuvB(12)-Holliday junction (HJ) complex. HJ DNA is sandwiched between 2 RuvA tetramers; dsDNA enters through RuvA and exits via RuvB. An RuvB hexamer assembles on each DNA strand where it exits the tetramer. Each RuvB hexamer is contacted by two RuvA subunits (via domain III) on 2 adjacent RuvB subunits; this complex drives branch migration. In the full resolvosome a probable DNA-RuvA(4)-RuvB(12)-RuvC(2) complex forms which resolves the HJ.

It localises to the cytoplasm. It carries out the reaction ATP + H2O = ADP + phosphate + H(+). The RuvA-RuvB-RuvC complex processes Holliday junction (HJ) DNA during genetic recombination and DNA repair, while the RuvA-RuvB complex plays an important role in the rescue of blocked DNA replication forks via replication fork reversal (RFR). RuvA specifically binds to HJ cruciform DNA, conferring on it an open structure. The RuvB hexamer acts as an ATP-dependent pump, pulling dsDNA into and through the RuvAB complex. RuvB forms 2 homohexamers on either side of HJ DNA bound by 1 or 2 RuvA tetramers; 4 subunits per hexamer contact DNA at a time. Coordinated motions by a converter formed by DNA-disengaged RuvB subunits stimulates ATP hydrolysis and nucleotide exchange. Immobilization of the converter enables RuvB to convert the ATP-contained energy into a lever motion, pulling 2 nucleotides of DNA out of the RuvA tetramer per ATP hydrolyzed, thus driving DNA branch migration. The RuvB motors rotate together with the DNA substrate, which together with the progressing nucleotide cycle form the mechanistic basis for DNA recombination by continuous HJ branch migration. Branch migration allows RuvC to scan DNA until it finds its consensus sequence, where it cleaves and resolves cruciform DNA. This is Holliday junction branch migration complex subunit RuvB from Bifidobacterium adolescentis (strain ATCC 15703 / DSM 20083 / NCTC 11814 / E194a).